The primary structure comprises 397 residues: P2X purinoceptor 3 (397 aa).

Residues 1 to 20 (MNCISDFFTYETTKSVVVKS) are Cytoplasmic-facing. The helical transmembrane segment at 21–43 (WTIGIINRAVQLLIISYFVGWVF) threads the bilayer. Residues 44-322 (LHEKAYQVRD…AGKFNIIPTI (279 aa)) lie on the Extracellular side of the membrane. ATP-binding residues include K63 and K65. 3 disulfides stabilise this stretch: C107–C153, C116–C137, and C122–C147. E111 serves as a coordination point for Mg(2+). A glycan (N-linked (GlcNAc...) asparagine) is linked at N139. Residue D158 coordinates Mg(2+). D158 is a Ca(2+) binding site. N170 carries N-linked (GlcNAc...) asparagine glycosylation. Residue T172 coordinates ATP. The N-linked (GlcNAc...) asparagine glycan is linked to N194. Intrachain disulfides connect C203–C213 and C247–C256. S275, N279, and R281 together coordinate ATP. N290 carries an N-linked (GlcNAc...) asparagine glycan. An ATP-binding site is contributed by K299. Residues 323 to 341 (ISSVAAFTSVGVGTVLCDI) traverse the membrane as a helical segment. The Cytoplasmic portion of the chain corresponds to 342-397 (ILLNFLKGADHYKARKFEEVTETTLKGTASTNPVFTSDQATVEKQSTDSGAYSIGH).

It belongs to the P2X receptor family. Homotrimer. Forms heterotrimer with P2RX2. Heterotrimeric P2RX2/3 has a ligand dose-response profile that is distinct from either homotrimeric P2RX2 or P2RX3.

It localises to the cell membrane. It catalyses the reaction Ca(2+)(in) = Ca(2+)(out). The catalysed reaction is Na(+)(in) = Na(+)(out). With respect to regulation, has high sensitivity to ATP. Fast activation by external ATP. Exhibits rapid desensitization. Sensitives to the ATP agonist:alpha/beta-methylene-ATP. Subject to allosteric inhibition by AF-219. Mg(2+) and Ca(2+) slow deactivation of P2RX3. Its function is as follows. Extracellular ATP-activated non-selective cation channel. Plays particularly important role in sensory neurons where its activation is critical for gustatory, nociceptive responses, visceral reflexes and sensory hypersensitization. The sequence is that of P2X purinoceptor 3 (P2rx3) from Mus musculus (Mouse).